The chain runs to 336 residues: Phosphate acyltransferase (336 aa).

It belongs to the PlsX family. In terms of assembly, homodimer. Probably interacts with PlsY.

The protein localises to the cytoplasm. It catalyses the reaction a fatty acyl-[ACP] + phosphate = an acyl phosphate + holo-[ACP]. The protein operates within lipid metabolism; phospholipid metabolism. Functionally, catalyzes the reversible formation of acyl-phosphate (acyl-PO(4)) from acyl-[acyl-carrier-protein] (acyl-ACP). This enzyme utilizes acyl-ACP as fatty acyl donor, but not acyl-CoA. In Pseudomonas aeruginosa (strain UCBPP-PA14), this protein is Phosphate acyltransferase.